A 103-amino-acid chain; its full sequence is Sec-independent protein translocase protein TatA (103 aa).

The chain crosses the membrane as a helical span at residues 1 to 21 (MSLGPWEIAIIVLLIIVLFGA). A disordered region spans residues 42–103 (VKEMQKDDET…QNYEDPNRTP (62 aa)). Over residues 52-90 (PAQPEQQPQGYQHPQQIEAPQNLQQPNFQQHYQNQPQQP) the composition is skewed to low complexity. Residues 94-103 (QNYEDPNRTP) are compositionally biased toward basic and acidic residues.

It belongs to the TatA/E family. As to quaternary structure, the Tat system comprises two distinct complexes: a TatABC complex, containing multiple copies of TatA, TatB and TatC subunits, and a separate TatA complex, containing only TatA subunits. Substrates initially bind to the TatABC complex, which probably triggers association of the separate TatA complex to form the active translocon.

It localises to the cell membrane. Part of the twin-arginine translocation (Tat) system that transports large folded proteins containing a characteristic twin-arginine motif in their signal peptide across membranes. TatA could form the protein-conducting channel of the Tat system. This is Sec-independent protein translocase protein TatA from Corynebacterium efficiens (strain DSM 44549 / YS-314 / AJ 12310 / JCM 11189 / NBRC 100395).